We begin with the raw amino-acid sequence, 515 residues long: Cytochrome P450 monooxygenase ptmJ (515 aa).

4 consecutive transmembrane segments (helical) span residues 6–26 (LGPF…LFVI), 50–70 (LGVV…LFCV), 82–102 (VFYL…EPVV), and 300–320 (VIIL…LFLH). Heme is bound at residue Cys-449.

Belongs to the cytochrome P450 family. Heme serves as cofactor.

It is found in the membrane. It functions in the pathway secondary metabolite biosynthesis. Cytochrome P450 monooxygenase; part of the gene cluster that mediates the biosynthesis of the indole diterpenes penitrems. The geranylgeranyl diphosphate (GGPP) synthase ptmG catalyzes the first step in penitrem biosynthesis via conversion of farnesyl pyrophosphate and isopentyl pyrophosphate into geranylgeranyl pyrophosphate (GGPP). Condensation of indole-3-glycerol phosphate with GGPP by the prenyl transferase ptmC then forms 3-geranylgeranylindole (3-GGI). Epoxidation by the FAD-dependent monooxygenase ptmM leads to a epoxidized-GGI that is substrate of the terpene cyclase ptmB for cyclization to yield paspaline. Paspaline is subsequently converted to 13-desoxypaxilline by the cytochrome P450 monooxygenase ptmP, the latter being then converted to paxilline by the cytochrome P450 monooxygenase ptmQ. Paxilline is converted to beta-paxitriol via C-10 ketoreduction by the short-chain dehydrogenase ptmH which can be monoprenylated at the C-20 by the indole diterpene prenyltransferase ptmD. A two-step elimination (acetylation and elimination) process performed by the O-acetyltransferase ptmV and ptmI leads to the production of the prenylated form of penijanthine. The FAD-linked oxidoreductase ptmO then converts the prenylated form of penijanthine into PC-M5 which is in turn transformed into PC-M4 by the aromatic dimethylallyltransferase ptmE. Five sequential oxidative transformations performed by the cytochrome P450 monooxygenases ptmK, ptmU, ptmL, ptmN and ptmJ yield the various penitrem compounds. PtmK, ptmU and ptmM are involved in the formation of the key bicyclic ring of penitrem C via the formation of the intermediates secopenitrem D and penitrem D. PtmL catalyzes the epoxidation of penitrem D and C to yield penitrem B and F, respectively. PtmJ catalyzes the last benzylic hydroxylation to convert penitrem B to prenitrem E and penitrem F to penitrem A. This chain is Cytochrome P450 monooxygenase ptmJ, found in Penicillium ochrochloron.